The following is a 332-amino-acid chain: MTISQAAGNVCTVSALNTKKHQTTNSVDSEVIYLPNTDCTIKSQACLSAFTSYRVGGAADLYVAPRNLEALQASLKYAKEGDLKVTTLGAGSNLLVSDGGISGLVIATRHLRFSHFDPQTGQLTVAAGESIPSLAWAAAELGWQGLEWAVGIPGTAGGAVVMNAGAHNSCIADMLVSAEVLSPDGTLETLTPEQLGYSYRTSLLQGGDRIVTQATLQLAPGADPAKVVAITKEHKKHRLSTQPYNFPSCGSVFRNPKPYSAGWLIEQTGLKGYQIGGAQVALLHANFIVNRGGAKASDIFCLIRHIQHQVQERWSINLEPEVKMLGEFQGAC.

One can recognise an FAD-binding PCMH-type domain in the interval 55 to 221; it reads VGGAADLYVA…TQATLQLAPG (167 aa). R200 is an active-site residue. Catalysis depends on S251, which acts as the Proton donor. E321 is an active-site residue.

Belongs to the MurB family. It depends on FAD as a cofactor.

The protein localises to the cytoplasm. The catalysed reaction is UDP-N-acetyl-alpha-D-muramate + NADP(+) = UDP-N-acetyl-3-O-(1-carboxyvinyl)-alpha-D-glucosamine + NADPH + H(+). It participates in cell wall biogenesis; peptidoglycan biosynthesis. Its function is as follows. Cell wall formation. The protein is UDP-N-acetylenolpyruvoylglucosamine reductase of Nostoc punctiforme (strain ATCC 29133 / PCC 73102).